The sequence spans 157 residues: Secreted effector protein See1 (157 aa).

An N-terminal signal peptide occupies residues 1 to 21 (MLFTTFVSLLLVILCLVHVSA). The segment at 124–157 (SYRYGDSHGNSREAEYSVADHQSASGEYKFGPTT) is disordered. Residues 128 to 138 (GDSHGNSREAE) show a composition bias toward basic and acidic residues.

As to quaternary structure, interacts with a maize homolog of SGT1, a factor acting in cell cycle progression in yeast Saccharomyces cerevisiae and an important component of plant and human innate immunity.

Its subcellular location is the secreted. The protein localises to the host cytoplasm. The protein resides in the host nucleus. Its function is as follows. Effector protein involved in the induction of tumors in infected plant tissues by the fungus. Required for the reactivation of plant DNA synthesis, which is crucial for tumor progression in leaf cells. Interferes with the MAPK-triggered phosphorylation of maize SGT1 at a monocot-specific phosphorylation site, resulting in both modulation of immune responses and reactivation of DNA synthesis during leaf tumor formation. In Mycosarcoma maydis (Corn smut fungus), this protein is Secreted effector protein See1.